The sequence spans 468 residues: Mitochondrial dynamics protein MID51 (468 aa).

At 1-29 the chain is on the mitochondrial intermembrane side; the sequence is MAGVNGDRKGKKDDNGLGTAIDFVLSNAK. A helical transmembrane segment spans residues 30–47; sequence LVLGVGGAAMLGIATLAV. Residues 48–468 are Cytoplasmic-facing; it reads KRMYDRALSA…SDPESLLRTV (421 aa). A dimerization region spans residues 50-196; it reads MYDRALSAPS…LSGSLYDDLQ (147 aa). The disordered stretch occupies residues 56–123; sequence SAPSSPTKAD…RGLARGGRPA (68 aa). The span at 91–108 shows a compositional bias: polar residues; the sequence is QNVSRSLQTLPTSSSSFK. The tract at residues 161–170 is important for interaction with DNM1L; the sequence is AALDICAELR. Ser-188, Ser-190, and His-202 together coordinate ADP. The interval 235-244 is important for interaction with DNM1L; that stretch reads RRENLEYFPR. 3 residues coordinate ADP: Ser-344, Arg-346, and Lys-372.

This sequence belongs to the MID49/MID51 family. Homodimer.

It is found in the mitochondrion outer membrane. Its function is as follows. Mitochondrial outer membrane protein which regulates mitochondrial fission/fusion dynamics. Promotes the recruitment and association of the fission mediator dynamin-related protein 1 (DNM1L) to the mitochondrial surface independently of the mitochondrial fission FIS1 and MFF proteins. Regulates DNM1L GTPase activity and DNM1L oligomerization. This chain is Mitochondrial dynamics protein MID51 (mief1), found in Danio rerio (Zebrafish).